Consider the following 247-residue polypeptide: Uridylate kinase (247 aa).

14 to 17 contributes to the ATP binding site; the sequence is KLSG. The involved in allosteric activation by GTP stretch occupies residues 22–27; sequence GERGVG. Gly56 serves as a coordination point for UMP. Positions 57 and 61 each coordinate ATP. UMP is bound by residues Asp76 and 137–144; that span reads IGSPYFST. ATP is bound by residues Asn165, Tyr171, and Asp174.

The protein belongs to the UMP kinase family. In terms of assembly, homohexamer.

The protein localises to the cytoplasm. It carries out the reaction UMP + ATP = UDP + ADP. The protein operates within pyrimidine metabolism; CTP biosynthesis via de novo pathway; UDP from UMP (UMPK route): step 1/1. With respect to regulation, allosterically activated by GTP. Inhibited by UTP. Functionally, catalyzes the reversible phosphorylation of UMP to UDP. The polypeptide is Uridylate kinase (Streptococcus pneumoniae (strain ATCC BAA-255 / R6)).